Consider the following 662-residue polypeptide: UvrABC system protein B (662 aa).

Positions 25 to 411 (DGIIAGDKFQ…STRIVEQVIR (387 aa)) constitute a Helicase ATP-binding domain. Position 38-45 (38-45 (GVTGSGKT)) interacts with ATP. Positions 91 to 114 (YYDYYQPEAYVPARDLYIEKDASI) match the Beta-hairpin motif. The region spanning 428–594 (QMEHIYGEVK…TIKKAIEDIL (167 aa)) is the Helicase C-terminal domain. The UVR domain occupies 625–660 (KKLIKKLEAQMAEYADMLMFEEAAVIRDKIEEVKRI).

This sequence belongs to the UvrB family. As to quaternary structure, forms a heterotetramer with UvrA during the search for lesions. Interacts with UvrC in an incision complex.

It localises to the cytoplasm. The UvrABC repair system catalyzes the recognition and processing of DNA lesions. A damage recognition complex composed of 2 UvrA and 2 UvrB subunits scans DNA for abnormalities. Upon binding of the UvrA(2)B(2) complex to a putative damaged site, the DNA wraps around one UvrB monomer. DNA wrap is dependent on ATP binding by UvrB and probably causes local melting of the DNA helix, facilitating insertion of UvrB beta-hairpin between the DNA strands. Then UvrB probes one DNA strand for the presence of a lesion. If a lesion is found the UvrA subunits dissociate and the UvrB-DNA preincision complex is formed. This complex is subsequently bound by UvrC and the second UvrB is released. If no lesion is found, the DNA wraps around the other UvrB subunit that will check the other stand for damage. The sequence is that of UvrABC system protein B from Treponema denticola (strain ATCC 35405 / DSM 14222 / CIP 103919 / JCM 8153 / KCTC 15104).